Here is a 696-residue protein sequence, read N- to C-terminus: Transcriptional regulatory protein pro1 (696 aa).

The tract at residues 1–48 is disordered; sequence MSTQSPNHHEDITKTSSVNMTTTTTTTKTKAAAKAGTNAAPKQKTQMH. Residues 21–40 are compositionally biased toward low complexity; that stretch reads TTTTTTTKTKAAAKAGTNAA. The segment at residues 55–82 is a DNA-binding region (zn(2)-C6 fungal-type); it reads CYTCRLRRKKCDEGSPMCTACKHLGLCC. Residues 112-145 are disordered; the sequence is LSEKSSHTIQTSINTPPGLSHSLPTSATFSDPLD. The span at 118–140 shows a compositional bias: polar residues; the sequence is HTIQTSINTPPGLSHSLPTSATF.

It localises to the nucleus. Its function is as follows. May be involved in fruiting body development. The polypeptide is Transcriptional regulatory protein pro1 (adv-1) (Neurospora crassa (strain ATCC 24698 / 74-OR23-1A / CBS 708.71 / DSM 1257 / FGSC 987)).